The primary structure comprises 360 residues: COP9 signalosome complex subunit 5 (360 aa).

Residues 60-197 (AKISALALLK…IGAFRTYPKD (138 aa)) form the MPN domain. Zn(2+) is bound by residues His-143, His-145, and Asp-156. The JAMM motif signature appears at 143-156 (HSHPGYGCWLSGID). 2 disordered regions span residues 293–315 (LMPS…RDSS) and 341–360 (SNKA…MVEA). The span at 341 to 350 (SNKASTSAPD) shows a compositional bias: polar residues.

This sequence belongs to the peptidase M67A family. CSN5 subfamily. Component of the CSN complex, probably composed of CSN1, CSN2, CSN3, CSN4, CSN5, CSN6, CSN7 and CSN8. Interacts with MCM2.

Probable protease subunit of the COP9 signalosome complex (CSN), a complex involved in various cellular and developmental processes such as photomorphogenesis and response to hormones. The CSN complex is an essential regulator of the ubiquitin (Ubl) conjugation pathway by mediating the deneddylation of the cullin subunits of SCF-type E3 ligase complexes, leading to decrease the Ubl ligase activity of SCF. Involved in early response to iron deficiency. In Oryza sativa subsp. japonica (Rice), this protein is COP9 signalosome complex subunit 5.